A 967-amino-acid polypeptide reads, in one-letter code: Zinc finger protein with KRAB and SCAN domains 2 (967 aa).

Residue lysine 22 forms a Glycyl lysine isopeptide (Lys-Gly) (interchain with G-Cter in SUMO2) linkage. Residues 45–127 (RKCFRQFCYE…ALVVHLEKET (83 aa)) form the SCAN box domain. The tract at residues 150 to 205 (WEVADFQPEQVETQPRAVSREEPGSLHSGHQEQLNRKRERRPLPKNARPSPWVPAL) is disordered. Basic and acidic residues predominate over residues 167-185 (VSREEPGSLHSGHQEQLNR). Residues 229–300 (VKDVHVARGF…GLHSSNKRSI (72 aa)) form the KRAB domain. Glycyl lysine isopeptide (Lys-Gly) (interchain with G-Cter in SUMO2) cross-links involve residues lysine 242, lysine 259, lysine 277, lysine 337, lysine 482, and lysine 529. The span at 586-602 (RASAPSPSTPEEVPSPS) shows a compositional bias: low complexity. The disordered stretch occupies residues 586–626 (RASAPSPSTPEEVPSPSRQERGGIEVEPQEPTGWEPEETSQ). A phosphoserine mark is found at serine 591 and serine 600. Glycyl lysine isopeptide (Lys-Gly) (interchain with G-Cter in SUMO2) cross-links involve residues lysine 734, lysine 745, and lysine 752. C2H2-type zinc fingers lie at residues 775 to 797 (YKCG…QRIH), 803 to 825 (FKCL…QRIH), 831 to 853 (YRCG…QRTH), 859 to 881 (YQCG…RRVH), 887 to 909 (YKCV…RRIH), and 915 to 937 (YGCA…REVH). The disordered stretch occupies residues 941–967 (KPLPHPPSLYCPENPHKGKTDEFRKTF). Basic and acidic residues predominate over residues 954–967 (NPHKGKTDEFRKTF).

This sequence belongs to the krueppel C2H2-type zinc-finger protein family.

It is found in the nucleus. Its function is as follows. May be involved in transcriptional regulation. In Homo sapiens (Human), this protein is Zinc finger protein with KRAB and SCAN domains 2 (ZKSCAN2).